We begin with the raw amino-acid sequence, 34 residues long: Papillosin (34 aa).

In terms of biological role, has strong antibacterial activity against the Gram-positive bacteria M.luteus, S.aureus, B.megaterium, A.viridans and E.faecalis, and against the Gram-negative bacteria K.pneumoniae, E.coli DH5alpha, S.typhimurium, P.aeruginosa and E.aerogenes. Lacks hemolytic activity against sheep erythrocytes. The chain is Papillosin from Halocynthia papillosa (Red sea-squirt).